We begin with the raw amino-acid sequence, 517 residues long: G-protein coupled receptor Mth (517 aa).

The first 27 residues, Met-1 to Ala-27, serve as a signal peptide directing secretion. Topologically, residues Ala-28–Gln-221 are extracellular. 5 disulfides stabilise this stretch: Cys-32–Cys-86, Cys-88–Cys-93, Cys-97–Cys-191, Cys-98–Cys-109, and Cys-153–Cys-212. Residues Asn-48 and Asn-61 are each glycosylated (N-linked (GlcNAc...) asparagine). N-linked (GlcNAc...) asparagine glycosylation is found at Asn-126, Asn-173, and Asn-201. Residues Thr-222–Val-242 form a helical membrane-spanning segment. Residues Lys-243 to Lys-251 lie on the Cytoplasmic side of the membrane. A helical transmembrane segment spans residues Cys-252 to Trp-272. Topologically, residues Gln-273–Cys-279 are extracellular. Residues Ile-280–Ile-300 traverse the membrane as a helical segment. Residues Ser-301–Arg-323 lie on the Cytoplasmic side of the membrane. A helical membrane pass occupies residues Phe-324–Leu-344. At Ala-345–Ala-373 the chain is on the extracellular side. Residues Met-374–Leu-394 form a helical membrane-spanning segment. Residues Thr-395–Thr-427 are Cytoplasmic-facing. The helical transmembrane segment at Phe-428 to Ile-448 threads the bilayer. Residues Ser-449–Asn-457 lie on the Extracellular side of the membrane. N-linked (GlcNAc...) asparagine glycosylation occurs at Asn-452. The helical transmembrane segment at Val-458 to Val-478 threads the bilayer. The Cytoplasmic portion of the chain corresponds to Leu-479 to Leu-517.

The protein belongs to the G-protein coupled receptor 2 family. Mth subfamily. Homodimer.

It localises to the cell membrane. Functionally, involved in biological aging and stress response. Essential for adult survival. The sequence is that of G-protein coupled receptor Mth (mth) from Drosophila yakuba (Fruit fly).